Consider the following 116-residue polypeptide: Ribosome-binding factor A (116 aa).

The protein belongs to the RbfA family. Monomer. Binds 30S ribosomal subunits, but not 50S ribosomal subunits or 70S ribosomes.

The protein resides in the cytoplasm. One of several proteins that assist in the late maturation steps of the functional core of the 30S ribosomal subunit. Associates with free 30S ribosomal subunits (but not with 30S subunits that are part of 70S ribosomes or polysomes). Required for efficient processing of 16S rRNA. May interact with the 5'-terminal helix region of 16S rRNA. The chain is Ribosome-binding factor A from Pediococcus pentosaceus (strain ATCC 25745 / CCUG 21536 / LMG 10740 / 183-1w).